The sequence spans 245 residues: DNA repair protein RecO (245 aa).

The protein belongs to the RecO family.

In terms of biological role, involved in DNA repair and RecF pathway recombination. This is DNA repair protein RecO from Porphyromonas gingivalis (strain ATCC BAA-308 / W83).